We begin with the raw amino-acid sequence, 100 residues long: Small ribosomal subunit protein uS14c (100 aa).

This sequence belongs to the universal ribosomal protein uS14 family. In terms of assembly, part of the 30S ribosomal subunit.

The protein resides in the plastid. The protein localises to the chloroplast. In terms of biological role, binds 16S rRNA, required for the assembly of 30S particles. The sequence is that of Small ribosomal subunit protein uS14c from Stigeoclonium helveticum (Green alga).